Consider the following 161-residue polypeptide: Small ribosomal subunit protein uS15 (161 aa).

Residues 1–13 (MAGKRRKKGRSHS) are compositionally biased toward basic residues. The tract at residues 1–22 (MAGKRRKKGRSHSTRPATPTVP) is disordered.

It belongs to the universal ribosomal protein uS15 family. As to quaternary structure, part of the 30S ribosomal subunit.

This Hyperthermus butylicus (strain DSM 5456 / JCM 9403 / PLM1-5) protein is Small ribosomal subunit protein uS15.